The following is a 152-amino-acid chain: MSTPARKRLMRDFKRLQQDPPAGISGAPQDNNIMLWNAVIFGPDDTPWDGGTFKLSLQFSEDYPNKPPTVRFVSRMFHPNIYADGSICLDILQNQWSPIYDVAAILTSIQSLLCDPNPNSPANSEAARMYSESKREYNRRVRDVVEQSWTAD.

In terms of domain architecture, UBC core spans 4 to 150 (PARKRLMRDF…VRDVVEQSWT (147 aa)). C88 (glycyl thioester intermediate) is an active-site residue. The segment at 119 to 152 (NSPANSEAARMYSESKREYNRRVRDVVEQSWTAD) is disordered. Positions 131-145 (SESKREYNRRVRDVV) are enriched in basic and acidic residues.

The protein belongs to the ubiquitin-conjugating enzyme family. As to expression, ubiquitously expressed.

The enzyme catalyses S-ubiquitinyl-[E1 ubiquitin-activating enzyme]-L-cysteine + [E2 ubiquitin-conjugating enzyme]-L-cysteine = [E1 ubiquitin-activating enzyme]-L-cysteine + S-ubiquitinyl-[E2 ubiquitin-conjugating enzyme]-L-cysteine.. It functions in the pathway protein modification; protein ubiquitination. Accepts the ubiquitin from the E1 complex and catalyzes its covalent attachment to other proteins. The protein is Ubiquitin-conjugating enzyme E2 1 (UBC1) of Arabidopsis thaliana (Mouse-ear cress).